The following is a 216-amino-acid chain: Minor fimbrial subunit HifD (216 aa).

The N-terminal stretch at 1 to 19 (MQKTPKKLTALCHQQSTAS) is a signal peptide. A lipid anchor (N-palmitoyl cysteine) is attached at Cys20. The S-diacylglycerol cysteine moiety is linked to residue Cys20. The tract at residues 159 to 180 (PINVDGSQANSEKAPDTGKEQN) is disordered.

This sequence belongs to the fimbrial protein family.

Its subcellular location is the cell membrane. The protein localises to the fimbrium. Its function is as follows. May be a minor structural protein required for pilus biogenesis. The protein is Minor fimbrial subunit HifD (hifD) of Haemophilus influenzae.